The chain runs to 248 residues: MTSHPRDTPQFYLTAPSPCPYLPGQEERKVFTHLVGRRARDLNEILTQGGFRRSQTIAYRPACETCRACVSVRVVVEDFAITGSQRRILQRNAGLIGTPEPNRPASEQYALFRRYLDARHGDGGMVDMTVLDYAMMIEDSHVDTHLVVYRERGPDSAIHGRGVGAPVAVCLTDVLADGLSMVYSFYDPEAASRSLGTYMILDHIQRARALGLPYLYLGYWVDGSRKMDYKAKFKPQERLMPQGWVRVE.

Belongs to the R-transferase family. Bpt subfamily.

The protein resides in the cytoplasm. It catalyses the reaction N-terminal L-glutamyl-[protein] + L-leucyl-tRNA(Leu) = N-terminal L-leucyl-L-glutamyl-[protein] + tRNA(Leu) + H(+). The catalysed reaction is N-terminal L-aspartyl-[protein] + L-leucyl-tRNA(Leu) = N-terminal L-leucyl-L-aspartyl-[protein] + tRNA(Leu) + H(+). Functions in the N-end rule pathway of protein degradation where it conjugates Leu from its aminoacyl-tRNA to the N-termini of proteins containing an N-terminal aspartate or glutamate. The chain is Aspartate/glutamate leucyltransferase from Methylorubrum populi (strain ATCC BAA-705 / NCIMB 13946 / BJ001) (Methylobacterium populi).